The following is a 188-amino-acid chain: NADH-quinone oxidoreductase subunit I 2 (188 aa).

2 4Fe-4S ferredoxin-type domains span residues 56-88 (HFLK…VVPY) and 98-127 (AKFE…LGQQ). The [4Fe-4S] cluster site is built by Cys68, Cys71, Cys74, Cys78, Cys107, Cys110, Cys113, and Cys117.

Belongs to the complex I 23 kDa subunit family. In terms of assembly, NDH-1 is composed of 14 different subunits. Subunits NuoA, H, J, K, L, M, N constitute the membrane sector of the complex. It depends on [4Fe-4S] cluster as a cofactor.

It is found in the cell inner membrane. It carries out the reaction a quinone + NADH + 5 H(+)(in) = a quinol + NAD(+) + 4 H(+)(out). Its function is as follows. NDH-1 shuttles electrons from NADH, via FMN and iron-sulfur (Fe-S) centers, to quinones in the respiratory chain. The immediate electron acceptor for the enzyme in this species is believed to be ubiquinone. Couples the redox reaction to proton translocation (for every two electrons transferred, four hydrogen ions are translocated across the cytoplasmic membrane), and thus conserves the redox energy in a proton gradient. In Rhizobium meliloti (strain 1021) (Ensifer meliloti), this protein is NADH-quinone oxidoreductase subunit I 2.